A 227-amino-acid polypeptide reads, in one-letter code: Ribose-5-phosphate isomerase A (227 aa).

Substrate contacts are provided by residues Thr26–Thr29, Asp82–Asp85, and Lys95–Gly98. The Proton acceptor role is filled by Glu104. Lys122 contributes to the substrate binding site.

Belongs to the ribose 5-phosphate isomerase family. In terms of assembly, homodimer.

The enzyme catalyses aldehydo-D-ribose 5-phosphate = D-ribulose 5-phosphate. It functions in the pathway carbohydrate degradation; pentose phosphate pathway; D-ribose 5-phosphate from D-ribulose 5-phosphate (non-oxidative stage): step 1/1. Catalyzes the reversible conversion of ribose-5-phosphate to ribulose 5-phosphate. The protein is Ribose-5-phosphate isomerase A of Streptococcus pneumoniae serotype 2 (strain D39 / NCTC 7466).